A 206-amino-acid polypeptide reads, in one-letter code: MTDPDLHQNDPENPAQASEPVVSKPYIMPDDPETGSAEAYAKEAAEARDKMLRTLAEMENLRKRTAREVADARMYGITGFARDVLDIADNLQRALDAVPAETRANADAGLKSLIEGVELTERSLLNTLEKNGVKKFDPTGQKFDPNFQQAMYEVPDPSVPSGTVVQVVQAGFMIGERVLRPALVGVSKGGAKAAPAASNDQSNSAA.

Basic and acidic residues predominate over residues 1 to 10 (MTDPDLHQND). Residues 1 to 38 (MTDPDLHQNDPENPAQASEPVVSKPYIMPDDPETGSAE) are disordered.

The protein belongs to the GrpE family. Homodimer.

It is found in the cytoplasm. In terms of biological role, participates actively in the response to hyperosmotic and heat shock by preventing the aggregation of stress-denatured proteins, in association with DnaK and GrpE. It is the nucleotide exchange factor for DnaK and may function as a thermosensor. Unfolded proteins bind initially to DnaJ; upon interaction with the DnaJ-bound protein, DnaK hydrolyzes its bound ATP, resulting in the formation of a stable complex. GrpE releases ADP from DnaK; ATP binding to DnaK triggers the release of the substrate protein, thus completing the reaction cycle. Several rounds of ATP-dependent interactions between DnaJ, DnaK and GrpE are required for fully efficient folding. This Bradyrhizobium sp. (strain ORS 278) protein is Protein GrpE.